We begin with the raw amino-acid sequence, 84 residues long: Mu-conotoxin-like Cal 12.2a (84 aa).

The N-terminal stretch at 1–19 (MKLTCVLVVLLLVLPFGDL) is a signal peptide. A propeptide spanning residues 20-42 (ITTSNTEDNKRGATPWQNSLKAR) is cleaved from the precursor. Disulfide bonds link cysteine 45–cysteine 57, cysteine 52–cysteine 65, cysteine 59–cysteine 70, and cysteine 64–cysteine 76. Proline 48 bears the 4-hydroxyproline mark. Position 72 is a 6'-bromotryptophan (tryptophan 72). A 4-hydroxyproline modification is found at proline 77. Tryptophan 81 bears the 6'-bromotryptophan mark.

This sequence belongs to the conotoxin O1 superfamily. Expressed by the venom duct.

The protein resides in the secreted. In terms of biological role, mu-conotoxins block voltage-gated sodium channels. This toxin reversibly blocks voltage-gated sodium channel in cephalopods, with no alteration in the voltage dependence of sodium conductance or on the kinetics of inactivation. The polypeptide is Mu-conotoxin-like Cal 12.2a (Californiconus californicus (California cone)).